The primary structure comprises 1405 residues: DNA-directed RNA polymerase subunit beta' (1405 aa).

Residues cysteine 70, cysteine 72, cysteine 85, and cysteine 88 each coordinate Zn(2+). 3 residues coordinate Mg(2+): aspartate 460, aspartate 462, and aspartate 464. Positions 814, 888, 895, and 898 each coordinate Zn(2+).

It belongs to the RNA polymerase beta' chain family. As to quaternary structure, the RNAP catalytic core consists of 2 alpha, 1 beta, 1 beta' and 1 omega subunit. When a sigma factor is associated with the core the holoenzyme is formed, which can initiate transcription. It depends on Mg(2+) as a cofactor. Requires Zn(2+) as cofactor.

The enzyme catalyses RNA(n) + a ribonucleoside 5'-triphosphate = RNA(n+1) + diphosphate. Functionally, DNA-dependent RNA polymerase catalyzes the transcription of DNA into RNA using the four ribonucleoside triphosphates as substrates. The sequence is that of DNA-directed RNA polymerase subunit beta' from Wigglesworthia glossinidia brevipalpis.